Consider the following 103-residue polypeptide: Small ribosomal subunit protein uS10 (103 aa).

Belongs to the universal ribosomal protein uS10 family. In terms of assembly, part of the 30S ribosomal subunit.

Its function is as follows. Involved in the binding of tRNA to the ribosomes. The protein is Small ribosomal subunit protein uS10 of Dechloromonas aromatica (strain RCB).